A 962-amino-acid chain; its full sequence is MTKQTLTQLEQHDLFLRRHIGPDSSQQQEMLNYVGAESLDDLTAQIVPESIRLNQELSIGDSCGEAEGIAYIRGLAKQNQVFKSYIGMGYYGTQVPNVILRNVFENPGWYTAYTPYQPEIAQGRLEAILNFQQVSMDLTGLDLASASLLDEATAAAEAMALAKRVSKAKKANIFFVADDVFPQTLDVVKTRAECFGFEVVVGPAHEAVNHELFGALFQYSNRFGQITDFTDLFAELRAKNVVVTVAADIMSLVLLKSPGAMGADVVFGSAQRFGVPMGFGGPHAAFFVARDEHKRSMPGRIIGVSKDTRGNRALRMAMQTREQHIRREKANSNICTAQILLANMASFYAVFHGPQGLKTIASRINRFTDILAAGLQAKGVSLVNNTWFDTISIKGLDVAAVNARALAAEMNLRFDADGIVGVSLDETTLRTDIEALFDVILGAGHGLDVAALDAQIVAQGSQSIPEALVRQDAILSHPTFNRYQSETEMMRYIKRLESKDLALNYSMISLGSCTMKLNAAVEMLPVSWPEFANMHPFCPLDQAKGYTQLIEELSSWLVNVTGYDAVCIQPNSGAQGEYAGLLAIRKYHESRGEAHRNICLIPQSAHGTNPASAQLAGMQVVVTACDKQGNVDLEDLKAKAAEVAENLSCIMITYPSTHGVYEESIREICNIVHQHGGQVYLDGANMNAQVGLTSPGFIGADVSHLNLHKTFAIPHGGGGPGMGPIGVKAHLAPFVAGHVVVKPGRESDNNGAVSAAPYGSAGILPISWMYIKLLGSNGLKKSTQTALLNANYVMKKLSEHYPVLFRGRNDRVAHECIIDLRPIKEASGVTEMDIAKRLNDYGFHAPTMSFPVAGTLMIEPTESESKVELDRFIDAMVSIRAEIAKVEAGEWPADNNPLHNAPHTMADIMDPAFDSRPYSREVAVFPSAAVRTNKFWPTVNRIDDVYGDRNLFCACVPLSDYE.

An N6-(pyridoxal phosphate)lysine modification is found at Lys-709.

The protein belongs to the GcvP family. The glycine cleavage system is composed of four proteins: P, T, L and H. Pyridoxal 5'-phosphate is required as a cofactor.

It catalyses the reaction N(6)-[(R)-lipoyl]-L-lysyl-[glycine-cleavage complex H protein] + glycine + H(+) = N(6)-[(R)-S(8)-aminomethyldihydrolipoyl]-L-lysyl-[glycine-cleavage complex H protein] + CO2. The glycine cleavage system catalyzes the degradation of glycine. The P protein binds the alpha-amino group of glycine through its pyridoxal phosphate cofactor; CO(2) is released and the remaining methylamine moiety is then transferred to the lipoamide cofactor of the H protein. The polypeptide is Glycine dehydrogenase (decarboxylating) (Shewanella sp. (strain MR-7)).